The primary structure comprises 365 residues: MNMDTSKVILIVAIIIWIILYSIRDSINLKTYGGIFGILRTKLGLKTIEKLGKYKIWQKIGIISIPICVILGFFMLLNIIDMSIRLLSGTLPKEAAKPVVFLFGDVIPWIPGIIALLIAISVHELAHGIFAKSFGIKVKSSGILLLLGLPLGAFVELGDEFKTADKKIRGAIASAGPLANLIIFLTSIPLLSFSYTLPTELKIIDVKEPASEFLQKGDIIYEINGKKINSLEDFKEFAKTIEPKKEYEIKILRDNKILTYKIVSSNEGKLGIMVSPTKNTALFINTIYWTYWFNFLLALFNLLPAMPLDGFHVWNAFPELLKERKNRFISKVGQILELFINEKTLGSITLLVWWVILGSILYSMW.

The next 6 helical transmembrane spans lie at 3-23, 60-80, 100-120, 141-161, 171-191, and 280-300; these read MDTSKVILIVAIIIWIILYSI, IGIISIPICVILGFFMLLNII, VFLFGDVIPWIPGIIALLIAI, SGILLLLGLPLGAFVELGDEF, AIASAGPLANLIIFLTSIPLL, and TALFINTIYWTYWFNFLLALF.

This sequence to S.solfataricus C04034.

The protein localises to the cell membrane. This is an uncharacterized protein from Methanocaldococcus jannaschii (strain ATCC 43067 / DSM 2661 / JAL-1 / JCM 10045 / NBRC 100440) (Methanococcus jannaschii).